The chain runs to 548 residues: Chaperonin GroEL (548 aa).

ATP-binding positions include 30–33 (TLGP), K51, 87–91 (DGTTT), G415, 479–481 (NAA), and D495.

The protein belongs to the chaperonin (HSP60) family. In terms of assembly, forms a cylinder of 14 subunits composed of two heptameric rings stacked back-to-back. Interacts with the co-chaperonin GroES.

It is found in the cytoplasm. The catalysed reaction is ATP + H2O + a folded polypeptide = ADP + phosphate + an unfolded polypeptide.. In terms of biological role, together with its co-chaperonin GroES, plays an essential role in assisting protein folding. The GroEL-GroES system forms a nano-cage that allows encapsulation of the non-native substrate proteins and provides a physical environment optimized to promote and accelerate protein folding. This chain is Chaperonin GroEL, found in Escherichia fergusonii (strain ATCC 35469 / DSM 13698 / CCUG 18766 / IAM 14443 / JCM 21226 / LMG 7866 / NBRC 102419 / NCTC 12128 / CDC 0568-73).